A 396-amino-acid chain; its full sequence is NADH-quinone oxidoreductase subunit D (396 aa).

This sequence belongs to the complex I 49 kDa subunit family. As to quaternary structure, NDH-1 is composed of 14 different subunits. Subunits NuoB, C, D, E, F, and G constitute the peripheral sector of the complex.

The protein resides in the cell inner membrane. It carries out the reaction a quinone + NADH + 5 H(+)(in) = a quinol + NAD(+) + 4 H(+)(out). Functionally, NDH-1 shuttles electrons from NADH, via FMN and iron-sulfur (Fe-S) centers, to quinones in the respiratory chain. The immediate electron acceptor for the enzyme in this species is believed to be ubiquinone. Couples the redox reaction to proton translocation (for every two electrons transferred, four hydrogen ions are translocated across the cytoplasmic membrane), and thus conserves the redox energy in a proton gradient. The sequence is that of NADH-quinone oxidoreductase subunit D from Methylobacterium sp. (strain 4-46).